Reading from the N-terminus, the 329-residue chain is GTP 3',8-cyclase (329 aa).

Residues 8-234 enclose the Radical SAM core domain; that stretch reads AFARKFYYLR…QLRQRSDGPA (227 aa). Arg-17 contacts GTP. [4Fe-4S] cluster contacts are provided by Cys-24 and Cys-28. Residue Tyr-30 participates in S-adenosyl-L-methionine binding. [4Fe-4S] cluster is bound at residue Cys-31. A GTP-binding site is contributed by Arg-68. S-adenosyl-L-methionine is bound at residue Gly-72. Thr-99 contacts GTP. Ser-123 contacts S-adenosyl-L-methionine. GTP is bound at residue Lys-160. Met-194 is a binding site for S-adenosyl-L-methionine. The [4Fe-4S] cluster site is built by Cys-257 and Cys-260. 262-264 contributes to the GTP binding site; sequence RLR. Cys-274 lines the [4Fe-4S] cluster pocket.

This sequence belongs to the radical SAM superfamily. MoaA family. In terms of assembly, monomer and homodimer. It depends on [4Fe-4S] cluster as a cofactor.

The catalysed reaction is GTP + AH2 + S-adenosyl-L-methionine = (8S)-3',8-cyclo-7,8-dihydroguanosine 5'-triphosphate + 5'-deoxyadenosine + L-methionine + A + H(+). Its pathway is cofactor biosynthesis; molybdopterin biosynthesis. Catalyzes the cyclization of GTP to (8S)-3',8-cyclo-7,8-dihydroguanosine 5'-triphosphate. The polypeptide is GTP 3',8-cyclase (Shigella boydii serotype 18 (strain CDC 3083-94 / BS512)).